The following is a 492-amino-acid chain: Aerolysin-4 (492 aa).

The N-terminal stretch at 1-23 is a signal peptide; that stretch reads MKKLKITGLSLIISGLLMAQAQA. Cystine bridges form between Cys42–Cys98 and Cys182–Cys187. An interaction with host N-linked glycan region spans residues 68–84; the sequence is WQISGLANGWVIMGPGY. The tract at residues 256 to 288 is part of the transmembrane beta-barrel after proteolytic activation of the toxin and insertion into the host membrane; that stretch reads YGLSEKVTTKNKFKWPLVGETELSIEIAANQSW. The segment at 346–355 is interaction with glycans from host GPI-anchor; the sequence is RWGGNAWYTH. Residues 446 to 492 constitute a propeptide that is removed on maturation; sequence AAASHSSRARNLSAGQGLRLEIPLDAQELSGLGFNNVSLSVTPAANQ.

This sequence belongs to the aerolysin family. In terms of assembly, homodimer in solution; homoheptamer in the host membrane. After binding to GPI-anchored proteins in target membranes and proteolytic removal of the C-terminal propeptide, the protein assembles into a heptameric pre-pore complex. A further conformation change leads to insertion into the host membrane. In terms of processing, proteolytic cleavage and subsequent release of the propeptide trigger a major conformation change, leading to the formation of a heptameric pre-pore that then inserts into the host membrane.

The protein resides in the secreted. The protein localises to the host cell membrane. Its function is as follows. Secreted, cytolytic toxin that forms pores in host membranes after proteolytic removal of a C-terminal propeptide, leading to destruction of the membrane permeability barrier and cell death. The pores are formed by transmembrane beta-strands and are approximately 3 nm in diameter. The protein is Aerolysin-4 (ahh4) of Aeromonas hydrophila.